Reading from the N-terminus, the 183-residue chain is Glutathione-regulated potassium-efflux system ancillary protein KefG (183 aa).

Belongs to the NAD(P)H dehydrogenase (quinone) family. KefG subfamily. As to quaternary structure, interacts with KefB.

The protein resides in the cell inner membrane. It catalyses the reaction a quinone + NADH + H(+) = a quinol + NAD(+). The enzyme catalyses a quinone + NADPH + H(+) = a quinol + NADP(+). In terms of biological role, regulatory subunit of a potassium efflux system that confers protection against electrophiles. Required for full activity of KefB. The protein is Glutathione-regulated potassium-efflux system ancillary protein KefG of Enterobacter sp. (strain 638).